Consider the following 344-residue polypeptide: Pre-mRNA-splicing factor cwc-21 (344 aa).

Residues 1–19 (MSDNVGLSTPRGSGTSGYV) are compositionally biased toward polar residues. Disordered stretches follow at residues 1–58 (MSDN…LEHD) and 98–344 (EMER…DNRD). Basic and acidic residues predominate over residues 38-58 (KDFDSLKHQPRQPDKGLLEHD). The CWF21 domain maps to 55–98 (LEHDRKREVEVKVFELRDKLEEEGVEEDEIETRCDELRRKLLAE). Residues 69-105 (ELRDKLEEEGVEEDEIETRCDELRRKLLAEMERNQNS) adopt a coiled-coil conformation. 3 stretches are compositionally biased toward basic and acidic residues: residues 120 to 167 (QVHE…REAN), 188 to 226 (RGGD…DRPP), and 238 to 277 (GGRD…DTGR). A compositionally biased stretch (basic residues) spans 288–306 (SRSRSRSRSYSRSRSPPRR). 2 stretches are compositionally biased toward basic and acidic residues: residues 307-316 (RAADSQDRSL) and 327-344 (SPDR…DNRD).

The protein belongs to the CWC21 family. As to quaternary structure, associates with the NTC complex (or PRP19-associated complex). The NTC complex associates with the spliceosome after the release of the U1 and U4 snRNAs and forms the CWC spliceosome subcomplex reminiscent of a late-stage spliceosome.

The protein localises to the cytoplasm. It is found in the nucleus. In terms of biological role, involved in pre-mRNA splicing. May function at or prior to the first catalytic step of splicing at the catalytic center of the spliceosome. May do so by stabilizing the catalytic center or the position of the RNA substrate. The chain is Pre-mRNA-splicing factor cwc-21 (cwc-21) from Neurospora crassa (strain ATCC 24698 / 74-OR23-1A / CBS 708.71 / DSM 1257 / FGSC 987).